A 134-amino-acid polypeptide reads, in one-letter code: MVSAWIYFTSLMLTCANIMLQMYFTVMYSDLKDDFINPIDLSRKLNWYVLPEMGFQAFSALLLLLSGAWITFLLNVPMLAWNAKMIMSNTHMHDSTTIFKDVSSRQKRSFFKLACFAVFFFVYLFLFVSRLVDE.

The next 3 helical transmembrane spans lie at 8–28, 54–74, and 113–133; these read FTSL…TVMY, GFQA…TFLL, and LACF…RLVD.

The protein belongs to the cornichon family.

The protein localises to the endoplasmic reticulum membrane. This is an uncharacterized protein from Schizosaccharomyces pombe (strain 972 / ATCC 24843) (Fission yeast).